We begin with the raw amino-acid sequence, 222 residues long: Protein Thf1 (222 aa).

Residues 169–208 (IEKVKRDLELYRSNLDKINQARSLMKELVEQERKRRAQQT) are a coiled coil. Residues 197 to 222 (VEQERKRRAQQTSAPPAVDASSDAPA) are disordered. The span at 209-222 (SAPPAVDASSDAPA) shows a compositional bias: low complexity.

Belongs to the THF1 family.

Its function is as follows. May be involved in photosynthetic membrane biogenesis. The chain is Protein Thf1 from Thermosynechococcus vestitus (strain NIES-2133 / IAM M-273 / BP-1).